A 788-amino-acid polypeptide reads, in one-letter code: Spastin (788 aa).

The segment at 1-105 (MVRTKNQSSS…PRSAGGPSSV (105 aa)) is disordered. Topologically, residues 1–116 (MVRTKNQSSS…KQNLYVVSFP (116 aa)) are cytoplasmic. The interval 1 to 227 (MVRTKNQSSS…NRSGSGYSPG (227 aa)) is required for localization to punctate cytoplasmic foci. 2 stretches are compositionally biased toward low complexity: residues 8–48 (SSSS…SSHR) and 57–75 (ATNV…SSPD). Residues 117-137 (IIFLFNVLRSLIYQLFCIFRY) constitute an intramembrane region (helical). The Cytoplasmic portion of the chain corresponds to 138–788 (LYGASTKVIY…WSSDYGDITI (651 aa)). A sufficient for interaction with microtubules and microtubule severing region spans residues 227-788 (GPGDPLLAKQ…WSSDYGDITI (562 aa)). Residues 240–315 (HRRAFEYISK…SMARDRLHFL (76 aa)) form the MIT domain. Residues 331 to 353 (EKQKANESREQQQKPQKAREAAD) show a composition bias toward basic and acidic residues. Residues 331–484 (EKQKANESRE…SGSGSGASTP (154 aa)) are disordered. Residues 387–400 (ATATTPTSSSSLAS) are compositionally biased toward low complexity. Polar residues-rich tracts occupy residues 419 to 433 (NKSQ…SKTS) and 453 to 469 (QFSS…RTPI). Residues 471–485 (NNGASGSGSGASTPV) form a required for interaction with microtubules region. Position 553-560 (553-560 (GPPGNGKT)) interacts with ATP.

Belongs to the AAA ATPase family. Spastin subfamily. Homohexamer. The homohexamer is stabilized by ATP-binding. The homohexamer may adopt a ring conformation through which microtubules pass prior to being severed. Interacts with microtubules. Interacts with atl; may be involved in microtubule dynamics.

The protein resides in the membrane. It is found in the cytoplasm. It localises to the cytoskeleton. Its subcellular location is the microtubule organizing center. The protein localises to the centrosome. The protein resides in the chromosome. It is found in the lipid droplet. The enzyme catalyses n ATP + n H2O + a microtubule = n ADP + n phosphate + (n+1) alpha/beta tubulin heterodimers.. Its function is as follows. ATP-dependent microtubule severing protein. Stimulates microtubule minus-end depolymerization and poleward microtubule flux in the mitotic spindle. Regulates microtubule stability in the neuromuscular junction synapse. Involved in lipid metabolism by regulating the size and distribution of lipid droplets. Involved in axon regeneration by regulating microtubule severing. The protein is Spastin of Drosophila persimilis (Fruit fly).